We begin with the raw amino-acid sequence, 149 residues long: Bis(5'-adenosyl)-triphosphatase (149 aa).

Residues 2-109 (SFRFGQHLIK…LPRKAGDFHR (108 aa)) form the HIT domain. Residues H8, N27, Q83, and 89–92 (GQTV) each bind substrate. The short motif at 94–98 (HVHVH) is the Histidine triad motif element. Catalysis depends on H96, which acts as the Tele-AMP-histidine intermediate. H98 serves as a coordination point for substrate. Phosphotyrosine is present on residues Y114 and Y147.

Homodimer. Interacts with UBE2I. Interacts with MDM2. Interacts with CTNNB1. Identified in a complex with CTNNB1 and LEF1. Post-translationally, phosphorylation at Tyr-114 by SRC is required for induction of apoptosis. Expressed in the brain, kidney, spleen, testis and lung.

The protein localises to the cytoplasm. It is found in the nucleus. Its subcellular location is the mitochondrion. It carries out the reaction P(1),P(3)-bis(5'-adenosyl) triphosphate + H2O = AMP + ADP + 2 H(+). The catalysed reaction is adenosine 5'-phosphosulfate + H2O = sulfate + AMP + 2 H(+). The enzyme catalyses adenosine 5'-phosphosulfate + NH4(+) = adenosine 5'-phosphoramidate + sulfate + 2 H(+). It catalyses the reaction adenosine 5'-phosphoramidate + H2O = AMP + NH4(+). Possesses dinucleoside triphosphate hydrolase activity. Cleaves P(1)-P(3)-bis(5'-adenosyl) triphosphate (Ap3A) to yield AMP and ADP. Can also hydrolyze P(1)-P(4)-bis(5'-adenosyl) tetraphosphate (Ap4A), but has extremely low activity with ATP. Exhibits adenylylsulfatase activity, hydrolyzing adenosine 5'-phosphosulfate to yield AMP and sulfate. Exhibits adenosine 5'-monophosphoramidase activity, hydrolyzing purine nucleotide phosphoramidates with a single phosphate group such as adenosine 5'monophosphoramidate (AMP-NH2) to yield AMP and NH2. Exhibits adenylylsulfate-ammonia adenylyltransferase, catalyzing the ammonolysis of adenosine 5'-phosphosulfate resulting in the formation of adenosine 5'-phosphoramidate. Also catalyzes the ammonolysis of adenosine 5-phosphorofluoridate and diadenosine triphosphate. Modulates transcriptional activation by CTNNB1 and thereby contributes to regulate the expression of genes essential for cell proliferation and survival, such as CCND1 and BIRC5. Plays a role in the induction of apoptosis via SRC and AKT1 signaling pathways. Inhibits MDM2-mediated proteasomal degradation of p53/TP53 and thereby plays a role in p53/TP53-mediated apoptosis. Induction of apoptosis depends on the ability of FHIT to bind P(1)-P(3)-bis(5'-adenosyl) triphosphate or related compounds, but does not require its catalytic activity Functions as a tumor suppressor. The protein is Bis(5'-adenosyl)-triphosphatase (FHIT) of Bos taurus (Bovine).